Consider the following 364-residue polypeptide: Glycerophosphodiester phosphodiesterase (364 aa).

Residues 1 to 18 (MKLKTLALSLLAAGVLAG) form the signal peptide. A lipid anchor (N-palmitoyl cysteine) is attached at cysteine 19. Cysteine 19 is lipidated: S-diacylglycerol cysteine. Positions 35 to 360 (KIIIAHRGAS…DFPDTGVEFL (326 aa)) constitute a GP-PDE domain. Histidine 40 functions as the Proton acceptor in the catalytic mechanism. Residues glutamate 67 and aspartate 69 each contribute to the Ca(2+) site. Residue histidine 82 is the Proton donor of the active site. Residue glutamate 175 coordinates Ca(2+).

This sequence belongs to the glycerophosphoryl diester phosphodiesterase family. Requires Ca(2+) as cofactor. Contains both ester- and amide-linked fatty acids.

It localises to the cell outer membrane. The enzyme catalyses a sn-glycero-3-phosphodiester + H2O = an alcohol + sn-glycerol 3-phosphate + H(+). Glycerophosphodiester phosphodiesterase hydrolyzes glycerophosphodiesters into glycerol-3-phosphate (G3P) and the corresponding alcohol. Has a specific affinity for human immunoglobulin D myeloma protein. This Haemophilus influenzae (strain ATCC 51907 / DSM 11121 / KW20 / Rd) protein is Glycerophosphodiester phosphodiesterase (glpQ).